Here is a 514-residue protein sequence, read N- to C-terminus: MDVKISAILLACIIQYAVSSPIQVFYSGAKILAEEDAMAKEDILKAIEKADPGSVKTQDSMDILSQILEANKGIKLQTQEGDIIQKQGRSAINDARFLWPKSADGIVPVPYNLSYSYNADQLALFKKAIQEFEALTCVRFVPWTTEVNFLNIMSNGGCGSLIGKNGGAQRLELDANGCMNMGIIQHELNHALGFYHEQNRSDRDDYVIIHTENIIPDFLKMFEKYNTNNLGIEYDYASVMHYSRYHYSINGDITIEPKPDPNVPIGQRDGLSILDISKINKLYECNVCSNLLPYSNGMMISANYPSAYPNNANCVWLIRTPSGQVTLQFQAFDIQSSSGCVSDYIKIYDGPTKAFPVLVNRACGTGLIPLQIASTNQMLVEFVSDRAVTGTGFKATYGSIQCGGAFYSSPKTFTSPNYPGNYTTNTNCTWTITAPAGFKVSLRITDFELEIGASCRYDYLNIYNSTLGAVMGPYCGPIDFHSAIVSKSNSMMITMNSDFSKQYKGFSATYTFVR.

The N-terminal stretch at 1-19 (MDVKISAILLACIIQYAVS) is a signal peptide. The 197-residue stretch at 90–286 (SAINDARFLW…SKINKLYECN (197 aa)) folds into the Peptidase M12A domain. Residue Asn-112 is glycosylated (N-linked (GlcNAc...) asparagine). 6 cysteine pairs are disulfide-bonded: Cys-137–Cys-285, Cys-158–Cys-178, Cys-288–Cys-314, Cys-340–Cys-363, Cys-402–Cys-428, and Cys-455–Cys-475. Zn(2+) is bound at residue His-186. The active site involves Glu-187. Zn(2+) contacts are provided by His-190 and His-196. N-linked (GlcNAc...) asparagine glycosylation is present at Asn-199. CUB domains are found at residues 288-400 (CSNL…YGSI) and 402-513 (CGGA…YTFV). Asn-421, Asn-427, and Asn-464 each carry an N-linked (GlcNAc...) asparagine glycan.

The cofactor is Zn(2+).

The sequence is that of Embryonic protein UVS.2 from Xenopus laevis (African clawed frog).